The chain runs to 549 residues: 4-hydroxybutyrate--CoA ligase 2 (549 aa).

Residues 195 to 203 (TSGTTGLPK), 336 to 341 (ETYGPH), D425, and R440 contribute to the ATP site. Residues 448-450 (GGE), K506, and 514-516 (CPK) each bind CoA. K530 contributes to the ATP binding site.

The protein belongs to the ATP-dependent AMP-binding enzyme family. Mg(2+) serves as cofactor. Mn(2+) is required as a cofactor.

The catalysed reaction is 4-hydroxybutanoate + ATP + CoA = 4-hydroxybutanoyl-CoA + AMP + diphosphate. It carries out the reaction acetate + ATP + CoA = acetyl-CoA + AMP + diphosphate. The enzyme catalyses propanoate + ATP + CoA = propanoyl-CoA + AMP + diphosphate. It catalyses the reaction a medium-chain fatty acid + ATP + CoA = a medium-chain fatty acyl-CoA + AMP + diphosphate. Catalyzes the ligation of coenzyme A (CoA) to 4-hydroxybutyrate (4HB). It can also use butyrate, valerate, propionate, acetate and 3-hydroxybutyrate (3HB) as substrates. The sequence is that of 4-hydroxybutyrate--CoA ligase 2 from Metallosphaera sedula (strain ATCC 51363 / DSM 5348 / JCM 9185 / NBRC 15509 / TH2).